A 218-amino-acid chain; its full sequence is N-(5'-phosphoribosyl)anthranilate isomerase (218 aa).

The protein belongs to the TrpF family.

The enzyme catalyses N-(5-phospho-beta-D-ribosyl)anthranilate = 1-(2-carboxyphenylamino)-1-deoxy-D-ribulose 5-phosphate. Its pathway is amino-acid biosynthesis; L-tryptophan biosynthesis; L-tryptophan from chorismate: step 3/5. The sequence is that of N-(5'-phosphoribosyl)anthranilate isomerase from Stenotrophomonas maltophilia (strain K279a).